The chain runs to 428 residues: Kynureninase (428 aa).

Residues Thr104, Thr105, 132–135 (FPSD), Asp213, His216, and Tyr238 each bind pyridoxal 5'-phosphate. Lys239 is modified (N6-(pyridoxal phosphate)lysine). Pyridoxal 5'-phosphate contacts are provided by Trp267 and Thr295.

The protein belongs to the kynureninase family. As to quaternary structure, homodimer. Pyridoxal 5'-phosphate is required as a cofactor.

It carries out the reaction L-kynurenine + H2O = anthranilate + L-alanine + H(+). The catalysed reaction is 3-hydroxy-L-kynurenine + H2O = 3-hydroxyanthranilate + L-alanine + H(+). It functions in the pathway amino-acid degradation; L-kynurenine degradation; L-alanine and anthranilate from L-kynurenine: step 1/1. The protein operates within cofactor biosynthesis; NAD(+) biosynthesis; quinolinate from L-kynurenine: step 2/3. Its function is as follows. Catalyzes the cleavage of L-kynurenine (L-Kyn) and L-3-hydroxykynurenine (L-3OHKyn) into anthranilic acid (AA) and 3-hydroxyanthranilic acid (3-OHAA), respectively. The chain is Kynureninase from Bacillus cereus (strain ZK / E33L).